Consider the following 240-residue polypeptide: Large ribosomal subunit protein uL2 (240 aa).

The span at 1 to 11 (MGKRLISQNRG) shows a compositional bias: polar residues. Disordered stretches follow at residues 1–28 (MGKR…KGAV) and 206–240 (GGGR…TGRK). Composition is skewed to basic residues over residues 13–28 (GTPK…KGAV) and 224–240 (SPGR…TGRK).

The protein belongs to the universal ribosomal protein uL2 family. As to quaternary structure, part of the 50S ribosomal subunit. Forms a bridge to the 30S subunit in the 70S ribosome.

Its function is as follows. One of the primary rRNA binding proteins. Required for association of the 30S and 50S subunits to form the 70S ribosome, for tRNA binding and peptide bond formation. It has been suggested to have peptidyltransferase activity; this is somewhat controversial. Makes several contacts with the 16S rRNA in the 70S ribosome. The polypeptide is Large ribosomal subunit protein uL2 (Methanococcus maripaludis (strain C5 / ATCC BAA-1333)).